Consider the following 405-residue polypeptide: MSTATSSTTSQHHIMGVYNRAPLAFERGRGARLISTEGEEYLDCVAGIATNGLGHAHPALVEVLKAQAEKLWHVSNIYRIPEQEELADALCANSFADVVFFTNSGTEAVECALKTARKYHSANGQPERIDIYGFDGSFHGRTYAAVNASGNPSYVDGFGPRLPGYSQLTFGDHDAIKAAIASPTTAAIIVEPVQGEGGARSIPTQCLVGLRQLCDEHGVLLIYDEVQCGMGRTGKLFAYEWAEGGEPHIMAVAKALGGGFPIGACLATTEAAKGMTVAAHGSTFGGNPLAMAVGKAALEIIKSPETLDNVKTVSGFFTQQLNGLKDRFPDVIVDVRGKGMLIGVKLIPNNRDFMVLARDEKLLIAGGGDNCVRLLPPLNLTIEEASEAIAKLEKACEAARAKAAA.

Residues 105 to 106 and phenylalanine 138 contribute to the pyridoxal 5'-phosphate site; that span reads GT. Residue arginine 141 participates in N(2)-acetyl-L-ornithine binding. 224-227 is a pyridoxal 5'-phosphate binding site; it reads DEVQ. Residue lysine 254 is modified to N6-(pyridoxal phosphate)lysine. Residue serine 282 participates in N(2)-acetyl-L-ornithine binding. Threonine 283 contributes to the pyridoxal 5'-phosphate binding site.

This sequence belongs to the class-III pyridoxal-phosphate-dependent aminotransferase family. ArgD subfamily. Homodimer. The cofactor is pyridoxal 5'-phosphate.

The protein resides in the cytoplasm. The catalysed reaction is N(2)-acetyl-L-ornithine + 2-oxoglutarate = N-acetyl-L-glutamate 5-semialdehyde + L-glutamate. The protein operates within amino-acid biosynthesis; L-arginine biosynthesis; N(2)-acetyl-L-ornithine from L-glutamate: step 4/4. This chain is Acetylornithine aminotransferase 2, found in Caulobacter vibrioides (strain ATCC 19089 / CIP 103742 / CB 15) (Caulobacter crescentus).